We begin with the raw amino-acid sequence, 358 residues long: 3-isopropylmalate dehydrogenase (358 aa).

Residues R92, R102, R130, and D224 each contribute to the substrate site. D224, D248, and D252 together coordinate Mg(2+). 282–294 lines the NAD(+) pocket; the sequence is GSAPDIAGQGIAN.

Belongs to the isocitrate and isopropylmalate dehydrogenases family. LeuB type 1 subfamily. In terms of assembly, homodimer. It depends on Mg(2+) as a cofactor. Requires Mn(2+) as cofactor.

The protein resides in the cytoplasm. The catalysed reaction is (2R,3S)-3-isopropylmalate + NAD(+) = 4-methyl-2-oxopentanoate + CO2 + NADH. It participates in amino-acid biosynthesis; L-leucine biosynthesis; L-leucine from 3-methyl-2-oxobutanoate: step 3/4. Functionally, catalyzes the oxidation of 3-carboxy-2-hydroxy-4-methylpentanoate (3-isopropylmalate) to 3-carboxy-4-methyl-2-oxopentanoate. The product decarboxylates to 4-methyl-2 oxopentanoate. This Bordetella parapertussis (strain 12822 / ATCC BAA-587 / NCTC 13253) protein is 3-isopropylmalate dehydrogenase.